We begin with the raw amino-acid sequence, 291 residues long: UDP-N-acetylenolpyruvoylglucosamine reductase (291 aa).

Residues 19 to 186 (GIGGPAEWIA…VSARLKLASG (168 aa)) enclose the FAD-binding PCMH-type domain. Arg165 is a catalytic residue. Ser215 acts as the Proton donor in catalysis. Residue Glu285 is part of the active site.

This sequence belongs to the MurB family. FAD is required as a cofactor.

It localises to the cytoplasm. It carries out the reaction UDP-N-acetyl-alpha-D-muramate + NADP(+) = UDP-N-acetyl-3-O-(1-carboxyvinyl)-alpha-D-glucosamine + NADPH + H(+). It participates in cell wall biogenesis; peptidoglycan biosynthesis. In terms of biological role, cell wall formation. This chain is UDP-N-acetylenolpyruvoylglucosamine reductase, found in Prochlorococcus marinus (strain NATL2A).